The sequence spans 163 residues: Small ribosomal subunit protein bS18c (163 aa).

2 disordered regions span residues 1–52 and 144–163; these read MYIS…IGPG and NLRN…SSDC. Positions 7-48 are enriched in basic residues; the sequence is PFRKSKQPFRKSKQTFHKSKQPFRKFKQPFRKSKQPFRRRSR.

Belongs to the bacterial ribosomal protein bS18 family. In terms of assembly, part of the 30S ribosomal subunit.

The protein resides in the plastid. It is found in the chloroplast. The sequence is that of Small ribosomal subunit protein bS18c from Sorghum bicolor (Sorghum).